We begin with the raw amino-acid sequence, 303 residues long: Phosphatidylglycerol--prolipoprotein diacylglyceryl transferase (303 aa).

Helical transmembrane passes span Leu18–Leu38, Leu58–Glu78, Ile106–Phe126, and Glu133–Gly153. Arg154 is a binding site for a 1,2-diacyl-sn-glycero-3-phospho-(1'-sn-glycerol). The next 3 membrane-spanning stretches (helical) occupy residues Pro193–Phe213, Leu223–Ile243, and Ile266–Tyr286.

Belongs to the Lgt family.

Its subcellular location is the cell inner membrane. The catalysed reaction is L-cysteinyl-[prolipoprotein] + a 1,2-diacyl-sn-glycero-3-phospho-(1'-sn-glycerol) = an S-1,2-diacyl-sn-glyceryl-L-cysteinyl-[prolipoprotein] + sn-glycerol 1-phosphate + H(+). It functions in the pathway protein modification; lipoprotein biosynthesis (diacylglyceryl transfer). Its function is as follows. Catalyzes the transfer of the diacylglyceryl group from phosphatidylglycerol to the sulfhydryl group of the N-terminal cysteine of a prolipoprotein, the first step in the formation of mature lipoproteins. The polypeptide is Phosphatidylglycerol--prolipoprotein diacylglyceryl transferase (Prochlorococcus marinus (strain NATL2A)).